Here is a 502-residue protein sequence, read N- to C-terminus: Maturase K (502 aa).

This sequence belongs to the intron maturase 2 family. MatK subfamily.

The protein resides in the plastid. It localises to the chloroplast. In terms of biological role, usually encoded in the trnK tRNA gene intron. Probably assists in splicing its own and other chloroplast group II introns. In Brassica campestris (Field mustard), this protein is Maturase K.